A 210-amino-acid chain; its full sequence is Putative RING-H2 finger protein ATL50 (210 aa).

Residues 35 to 55 traverse the membrane as a helical segment; the sequence is IVLLYITLLSIIFFVAALIHL. An RING-type; atypical zinc finger spans residues 122–164; the sequence is CAVCLREFTAEDELRLLPKCSHAFHVECIDTWLLTNSTCPLCR. The tract at residues 187–210 is disordered; sequence SDGDNSQDSDSSFMLTDLDDVESK.

The protein belongs to the RING-type zinc finger family. ATL subfamily.

The protein resides in the membrane. The enzyme catalyses S-ubiquitinyl-[E2 ubiquitin-conjugating enzyme]-L-cysteine + [acceptor protein]-L-lysine = [E2 ubiquitin-conjugating enzyme]-L-cysteine + N(6)-ubiquitinyl-[acceptor protein]-L-lysine.. It functions in the pathway protein modification; protein ubiquitination. The chain is Putative RING-H2 finger protein ATL50 (ATL50) from Arabidopsis thaliana (Mouse-ear cress).